Consider the following 343-residue polypeptide: Interferon-inducible protein AIM2 (343 aa).

The 87-residue stretch at 1–87 (MESKYKEILL…AKRLQEEKEK (87 aa)) folds into the Pyrin domain. The region spanning 138–337 (MVAQQESIRE…SGVHSTIKVI (200 aa)) is the HIN-200 domain.

The protein belongs to the HIN-200 family. In terms of assembly, self-associates; forms homooligomers in response to cytosolic double-stranded DNA (dsDNA) and the dsDNA seems to serve as oligomerization platform. Component of AIM2 inflammasome, which consists of a signal sensor component (AIM2), an adapter (PYCARD/ASC), which recruits an effector pro-inflammatory caspase (CASP1). Interacts (via pyrin domain) with PYCARD/ASC (via pyrin domain); interaction is direct. Component of the AIM2 PANoptosome complex, a multiprotein complex that drives inflammatory cell death (PANoptosis). Interacts with PYDC5; disrupts assembly of the AIM2 inflammasome complex. Interacts with EIF2AK2/PKR. Interacts with MAPRE1. Interacts with IFI16. Interacts with isoform IFI16-beta of IFI16; preventing the interaction between AIM2 and PYCARD/ASC. Interacts with RACK1; promoting association with PP2A phosphatase and dephosphorylation of AKT1. Interacts with TRIM11; promoting AIM2 recruitment to autophagosomes and autophagy-dependent degradation. (Microbial infection) Interacts with human herpesvirus 8 protein SOX/ORF37; this interaction inhibits AIM2 polymerization and subsequent inflammasome activation. Post-translationally, degraded via selective autophagy following interaction with TRIM11. As to expression, expressed in spleen, small intestine, peripheral blood leukocytes, and testis.

It is found in the cytoplasm. The protein localises to the inflammasome. Its subcellular location is the nucleus. With respect to regulation, inactive in absence of double-stranded DNA (dsDNA). Homooligomerizes upon binding to dsDNA, dsDNA serving as an oligomerization platform. AIM2 requires large dsDNA to generate a structural template that couples dsDNA ligand-binding and homooligomerization. Homooligomerization is followed by recruitment of PYCARD/ASC to initiate speck formation (nucleation). AIM2 and PYCARD/ASC homooligomer filaments assemble bidirectionally and the recognition between AIM2 and PYCARD/ASC oligomers occurs in a head-to-tail manner. Clustered PYCARD/ASC nucleates the formation of CASP1 filaments through the interaction of their respective CARD domains, acting as a platform for CASP1 polymerization and activation. Active CASP1 then specifically processes protein precursors, such as gasdermin-D (GSDMD), IL1B and IL18, leading to the release of mature cytokines in the extracellular milieu or pyroptosis, depending on cell type. AIM2 can be activated in response to events that cause genomic DNA (HIV protease inhibitor nelfinavir) or mitochondrial DNA release in the cytoplasm (such as Perfluoroalkyl substance pollutants or cholesterol overload). Activation of the AIM2 inflammasome is inhibited by isoform IFI16-beta of IFI16, which prevents the interaction between AIM2 and PYCARD/ASC. Activation of the AIM2 inflammasome is inhibited by TRIM11, which promotes autophagy-dependent degradation of AIM2. Sensor component of the AIM2 inflammasome, which mediates inflammasome activation in response to the presence of double-stranded DNA (dsDNA) in the cytosol, leading to subsequent pyroptosis. Inflammasomes are supramolecular complexes that assemble in the cytosol in response to pathogens and other damage-associated signals and play critical roles in innate immunity and inflammation. Acts as a recognition receptor (PRR): specifically recognizes and binds dsDNA in the cytosol, and mediates the formation of the inflammasome polymeric complex composed of AIM2, CASP1 and PYCARD/ASC. Recruitment of pro-caspase-1 (proCASP1) to the AIM2 inflammasome promotes caspase-1 (CASP1) activation, which subsequently cleaves and activates inflammatory cytokines IL1B and IL18 and gasdermin-D (GSDMD), promoting cytokine secretion. In some cells, CASP1 activation mediates cleavage and activation of GSDMD, triggering pyroptosis without promoting cytokine secretion. Detects cytosolic dsDNA of viral and bacterial origin in a non-sequence-specific manner. Involved in the DNA damage response caused by acute ionizing radiation by mediating pyroptosis of intestinal epithelial cells and bone marrow cells in response to double-strand DNA breaks. Mechanistically, AIM2 senses DNA damage in the nucleus to mediate inflammasome assembly and inflammatory cell death. Also acts as a regulator of neurodevelopment via its role in the DNA damage response: acts by promoting neural cell death in response to DNA damage in the developing brain, thereby purging genetically compromised cells of the central nervous system. Pyroptosis mediated by the AIM2 inflammasome in response to DNA damage is dependent on GSDMD without involving IL1B and IL18 cytokine secretion. Also acts as a mediator of pyroptosis, necroptosis and apoptosis (PANoptosis), an integral part of host defense against pathogens, in response to bacterial infection. Can also trigger PYCARD/ASC-dependent, caspase-1-independent cell death that involves caspase-8 (CASP8). In terms of biological role, also acts as a tumor suppressor independently of its role in inflammatory response. Able to suppress overt cell proliferation in enterocytes: restricts stem cell proliferation in the intestinal mucosa in an inflammasome-independent manner, contributing to a decrease in the likelihood of colorectal cancer development. AIM2 suppresses cell proliferation by inhibiting phosphorylation of AKT1 at 'Ser-473', preventing AKT1 activation and AKT-mTOR signaling pathway. Inhibits AKT1 phosphorylation both by inhibiting the activity of PRKDC/DNA-PK kinase and promoting dephosphorylation by PP2A phosphatase. Also acts as a key regulator of regulatory T-cells (Treg) homeostasis by promoting their stability: acts by preventing AKT1 activation. Its role in Treg homeostasis is important to restain autoimmune diseases. The sequence is that of Interferon-inducible protein AIM2 from Homo sapiens (Human).